A 98-amino-acid polypeptide reads, in one-letter code: NADH-ubiquinone oxidoreductase chain 4L (98 aa).

The next 3 membrane-spanning stretches (helical) occupy residues 1-21 (MHYIYINIIIAFSMSLLGALL), 29-49 (SLLCLEGMMLALFVLSTLIAL), and 61-81 (IILLVFAACEAAIGLSLLVMV).

It belongs to the complex I subunit 4L family. Core subunit of respiratory chain NADH dehydrogenase (Complex I) which is composed of 45 different subunits.

It localises to the mitochondrion inner membrane. It catalyses the reaction a ubiquinone + NADH + 5 H(+)(in) = a ubiquinol + NAD(+) + 4 H(+)(out). Its function is as follows. Core subunit of the mitochondrial membrane respiratory chain NADH dehydrogenase (Complex I) which catalyzes electron transfer from NADH through the respiratory chain, using ubiquinone as an electron acceptor. Part of the enzyme membrane arm which is embedded in the lipid bilayer and involved in proton translocation. This chain is NADH-ubiquinone oxidoreductase chain 4L (MT-ND4L), found in Procavia capensis (Rock hyrax).